We begin with the raw amino-acid sequence, 78 residues long: Large ribosomal subunit protein bL28 (78 aa).

Belongs to the bacterial ribosomal protein bL28 family.

This chain is Large ribosomal subunit protein bL28, found in Prochlorococcus marinus (strain MIT 9515).